The following is a 762-amino-acid chain: 5-methyltetrahydropteroyltriglutamate--homocysteine methyltransferase (762 aa).

5-methyltetrahydropteroyltri-L-glutamate contacts are provided by residues 16 to 19 and lysine 117; that span reads RELK. L-homocysteine-binding positions include 438 to 440 and glutamate 491; that span reads IGS. Residues 438-440 and glutamate 491 each bind L-methionine; that span reads IGS. 5-methyltetrahydropteroyltri-L-glutamate contacts are provided by residues 522–523 and tryptophan 568; that span reads RC. L-homocysteine is bound at residue aspartate 606. Aspartate 606 is an L-methionine binding site. Glutamate 612 is a binding site for 5-methyltetrahydropteroyltri-L-glutamate. Residues histidine 648, cysteine 650, and glutamate 672 each coordinate Zn(2+). The active-site Proton donor is the histidine 701. Zn(2+) is bound at residue cysteine 733.

It belongs to the vitamin-B12 independent methionine synthase family. The cofactor is Zn(2+).

The enzyme catalyses 5-methyltetrahydropteroyltri-L-glutamate + L-homocysteine = tetrahydropteroyltri-L-glutamate + L-methionine. The protein operates within amino-acid biosynthesis; L-methionine biosynthesis via de novo pathway; L-methionine from L-homocysteine (MetE route): step 1/1. Functionally, catalyzes the transfer of a methyl group from 5-methyltetrahydrofolate to homocysteine resulting in methionine formation. This chain is 5-methyltetrahydropteroyltriglutamate--homocysteine methyltransferase, found in Pseudomonas fluorescens (strain ATCC BAA-477 / NRRL B-23932 / Pf-5).